Consider the following 257-residue polypeptide: Type III pantothenate kinase (257 aa).

Residue 6–13 (DVGNTNTV) participates in ATP binding. Substrate-binding positions include Tyr100 and 107–110 (GADR). Catalysis depends on Asp109, which acts as the Proton acceptor. Asp129 contributes to the K(+) binding site. Thr132 is a binding site for ATP. Thr185 contributes to the substrate binding site.

This sequence belongs to the type III pantothenate kinase family. In terms of assembly, homodimer. Requires NH4(+) as cofactor. The cofactor is K(+).

It is found in the cytoplasm. The catalysed reaction is (R)-pantothenate + ATP = (R)-4'-phosphopantothenate + ADP + H(+). It participates in cofactor biosynthesis; coenzyme A biosynthesis; CoA from (R)-pantothenate: step 1/5. Functionally, catalyzes the phosphorylation of pantothenate (Pan), the first step in CoA biosynthesis. This Desulfatibacillum aliphaticivorans protein is Type III pantothenate kinase.